The following is a 349-amino-acid chain: Hydroxymethylglutaryl-CoA synthase (349 aa).

2 residues coordinate (3S)-3-hydroxy-3-methylglutaryl-CoA: D29 and A30. The Proton donor/acceptor role is filled by E81. (3S)-3-hydroxy-3-methylglutaryl-CoA contacts are provided by C113, T154, T202, and H235. Residue C113 is the Acyl-thioester intermediate of the active site. The Proton donor/acceptor role is filled by H235. R240 lines the CoA pocket. Positions 244, 267, and 297 each coordinate (3S)-3-hydroxy-3-methylglutaryl-CoA.

This sequence belongs to the thiolase-like superfamily. Archaeal HMG-CoA synthase family. As to quaternary structure, interacts with acetoacetyl-CoA thiolase that catalyzes the precedent step in the pathway and with a DUF35 protein. The acetoacetyl-CoA thiolase/HMG-CoA synthase complex channels the intermediate via a fused CoA-binding site, which allows for efficient coupling of the endergonic thiolase reaction with the exergonic HMGCS reaction.

The catalysed reaction is acetoacetyl-CoA + acetyl-CoA + H2O = (3S)-3-hydroxy-3-methylglutaryl-CoA + CoA + H(+). The protein operates within metabolic intermediate biosynthesis; (R)-mevalonate biosynthesis; (R)-mevalonate from acetyl-CoA: step 2/3. Its function is as follows. Catalyzes the condensation of acetyl-CoA with acetoacetyl-CoA to form 3-hydroxy-3-methylglutaryl-CoA (HMG-CoA). Functions in the mevalonate (MVA) pathway leading to isopentenyl diphosphate (IPP), a key precursor for the biosynthesis of isoprenoid compounds that are building blocks of archaeal membrane lipids. The polypeptide is Hydroxymethylglutaryl-CoA synthase (Caldivirga maquilingensis (strain ATCC 700844 / DSM 13496 / JCM 10307 / IC-167)).